A 298-amino-acid polypeptide reads, in one-letter code: Proline iminopeptidase (298 aa).

The region spanning 26–277 is the AB hydrolase-1 domain; that stretch reads VLLLHGGPAM…NGSHLAMWDD (252 aa). The active-site Nucleophile is the serine 103. The active site involves aspartate 244. Histidine 271 serves as the catalytic Proton donor.

This sequence belongs to the peptidase S33 family. As to quaternary structure, monomer.

It carries out the reaction Release of N-terminal proline from a peptide.. In terms of biological role, releases the N-terminal proline from various substrates. Cleaves specifically Pro-betaNA and small peptides containing proline at the amino terminal. No activity against hydroxyproline-betaNA. The chain is Proline iminopeptidase (fpaP) from Elizabethkingia meningoseptica (Chryseobacterium meningosepticum).